The chain runs to 696 residues: Polyribonucleotide nucleotidyltransferase (696 aa).

Mg(2+)-binding residues include Asp-489 and Asp-495. In terms of domain architecture, KH spans 556–615; the sequence is PQYVTMKINPEKIRDVIGKGGVVIREITEATNCAIDISDDGTIKIAAHTTEEGEAAKRRI. The region spanning 625–693 is the S1 motif domain; sequence GKVYEGTVVK…RQGRVRLSMK (69 aa).

It belongs to the polyribonucleotide nucleotidyltransferase family. Component of the RNA degradosome, which is a multiprotein complex involved in RNA processing and mRNA degradation. The cofactor is Mg(2+).

The protein resides in the cytoplasm. It catalyses the reaction RNA(n+1) + phosphate = RNA(n) + a ribonucleoside 5'-diphosphate. Its function is as follows. Involved in mRNA degradation. Catalyzes the phosphorolysis of single-stranded polyribonucleotides processively in the 3'- to 5'-direction. The sequence is that of Polyribonucleotide nucleotidyltransferase from Coxiella burnetii (strain CbuK_Q154) (Coxiella burnetii (strain Q154)).